The following is a 323-amino-acid chain: Galectin-4 (323 aa).

2 Galectin domains span residues 19–150 (YYQP…INFI) and 194–323 (YFGR…YVQI). 256–262 (WGSEEKK) is a binding site for a beta-D-galactoside. S258 is modified (phosphoserine).

Monomer.

In terms of biological role, galectin that binds lactose and a related range of sugars. May be involved in the assembly of adherens junctions. The chain is Galectin-4 (LGALS4) from Homo sapiens (Human).